Here is a 261-residue protein sequence, read N- to C-terminus: Transmembrane and immunoglobulin domain-containing protein 1 (261 aa).

Positions 1-26 (MVWKITGPLQACQLLLVVLSLPQGRT) are cleaved as a signal peptide. Residues 27–113 (SSVLTVNGRT…LQRDQTVSVT (87 aa)) enclose the Ig-like C2-type 1 domain. The Extracellular portion of the chain corresponds to 27–215 (SSVLTVNGRT…DFHLLVKDKV (189 aa)). A disulfide bridge connects residues Cys53 and Cys102. Residues Asn57, Asn82, Asn92, Asn117, Asn157, and Asn189 are each glycosylated (N-linked (GlcNAc...) asparagine). One can recognise an Ig-like C2-type 2 domain in the interval 121-206 (PPLLSGNGFQ…SSSLKMETMD (86 aa)). A disulfide bridge connects residues Cys142 and Cys194. A helical transmembrane segment spans residues 216–236 (FVMPAEPIIAACVVVVLTMAF). Over 237–261 (ALFSRRKRIMKLCGKKNDPNSETAL) the chain is Cytoplasmic.

As to quaternary structure, homodimer. In terms of processing, N-glycosylated.

The protein localises to the cell membrane. It is found in the cytoplasm. May control cell-cell adhesion, cell migration and proliferation, cell morphology, and protects renal epithelial cells from oxidative cell injury to promote cell survival. This is Transmembrane and immunoglobulin domain-containing protein 1 from Mus musculus (Mouse).